Consider the following 153-residue polypeptide: TM2 domain-containing protein DDB_G0277895 (153 aa).

The TM2 domain occupies 3 to 50 (QKSVCVTYLLWLFFGLFGIHRFYLNRPCSGVLYLFTCGCFFIGWFIDI). 2 consecutive transmembrane segments (helical) span residues 6–26 (VCVT…RFYL) and 33–53 (VLYL…ICLI). The tract at residues 85-153 (GSPQQQPYGA…GNYPPPYGPQ (69 aa)) is disordered. 6 consecutive repeat copies span residues 89-96 (QQPYGAPP), 97-104 (QQPYGAPP), 105-112 (QQPYGAPP), 113-120 (QQPYGAPP), 121-128 (QQPYGAPP), and 129-136 (PQPYGAPP). A 6 X 8 AA tandem repeat of Q-Q-P-Y-G-A-P-P region spans residues 89–136 (QQPYGAPPQQPYGAPPQQPYGAPPQQPYGAPPQQPYGAPPPQPYGAPP). Residues 93–153 (GAPPQQPYGA…GNYPPPYGPQ (61 aa)) are compositionally biased toward pro residues.

It belongs to the TM2 family.

It localises to the membrane. The sequence is that of TM2 domain-containing protein DDB_G0277895 from Dictyostelium discoideum (Social amoeba).